The following is a 286-amino-acid chain: Bifunctional protein FolD (286 aa).

NADP(+) is bound by residues 165 to 167 (GRS) and Ser-190.

The protein belongs to the tetrahydrofolate dehydrogenase/cyclohydrolase family. In terms of assembly, homodimer.

It carries out the reaction (6R)-5,10-methylene-5,6,7,8-tetrahydrofolate + NADP(+) = (6R)-5,10-methenyltetrahydrofolate + NADPH. It catalyses the reaction (6R)-5,10-methenyltetrahydrofolate + H2O = (6R)-10-formyltetrahydrofolate + H(+). Its pathway is one-carbon metabolism; tetrahydrofolate interconversion. Catalyzes the oxidation of 5,10-methylenetetrahydrofolate to 5,10-methenyltetrahydrofolate and then the hydrolysis of 5,10-methenyltetrahydrofolate to 10-formyltetrahydrofolate. The chain is Bifunctional protein FolD from Paraburkholderia phytofirmans (strain DSM 17436 / LMG 22146 / PsJN) (Burkholderia phytofirmans).